The primary structure comprises 394 residues: Quinolinate synthase (394 aa).

The iminosuccinate site is built by His-67 and Ser-84. Position 131 (Cys-131) interacts with [4Fe-4S] cluster. Residues 163-165 (YMN) and Ser-184 each bind iminosuccinate. Cys-254 serves as a coordination point for [4Fe-4S] cluster. Iminosuccinate is bound by residues 280 to 282 (HPE) and Thr-297. A [4Fe-4S] cluster-binding site is contributed by Cys-346.

This sequence belongs to the quinolinate synthase family. Type 3 subfamily. The cofactor is [4Fe-4S] cluster.

The protein localises to the cytoplasm. It catalyses the reaction iminosuccinate + dihydroxyacetone phosphate = quinolinate + phosphate + 2 H2O + H(+). The protein operates within cofactor biosynthesis; NAD(+) biosynthesis; quinolinate from iminoaspartate: step 1/1. In terms of biological role, catalyzes the condensation of iminoaspartate with dihydroxyacetone phosphate to form quinolinate. The chain is Quinolinate synthase from Streptomyces coelicolor (strain ATCC BAA-471 / A3(2) / M145).